A 267-amino-acid polypeptide reads, in one-letter code: Glutamate 5-kinase (267 aa).

Position 18 (Lys18) interacts with ATP. Residues Ser58, Asp145, and Asn157 each coordinate substrate. ATP contacts are provided by residues 177-178 (SD) and 219-225 (TGGMATK).

This sequence belongs to the glutamate 5-kinase family.

The protein resides in the cytoplasm. The enzyme catalyses L-glutamate + ATP = L-glutamyl 5-phosphate + ADP. Its pathway is amino-acid biosynthesis; L-proline biosynthesis; L-glutamate 5-semialdehyde from L-glutamate: step 1/2. Functionally, catalyzes the transfer of a phosphate group to glutamate to form L-glutamate 5-phosphate. The protein is Glutamate 5-kinase of Clostridium tetani (strain Massachusetts / E88).